A 665-amino-acid chain; its full sequence is DNA ligase (665 aa).

NAD(+)-binding positions include 31–35 (DQEFD), 80–81 (SL), and Glu-110. Residue Lys-112 is the N6-AMP-lysine intermediate of the active site. Arg-133, Glu-170, Lys-285, and Lys-309 together coordinate NAD(+). Residues Cys-403, Cys-406, Cys-421, and Cys-427 each contribute to the Zn(2+) site. The BRCT domain occupies 587–665 (EHTDKLAGKS…SEEEFLQMIE (79 aa)).

It belongs to the NAD-dependent DNA ligase family. LigA subfamily. Mg(2+) serves as cofactor. The cofactor is Mn(2+).

The enzyme catalyses NAD(+) + (deoxyribonucleotide)n-3'-hydroxyl + 5'-phospho-(deoxyribonucleotide)m = (deoxyribonucleotide)n+m + AMP + beta-nicotinamide D-nucleotide.. DNA ligase that catalyzes the formation of phosphodiester linkages between 5'-phosphoryl and 3'-hydroxyl groups in double-stranded DNA using NAD as a coenzyme and as the energy source for the reaction. It is essential for DNA replication and repair of damaged DNA. This Phocaeicola vulgatus (strain ATCC 8482 / DSM 1447 / JCM 5826 / CCUG 4940 / NBRC 14291 / NCTC 11154) (Bacteroides vulgatus) protein is DNA ligase.